A 331-amino-acid polypeptide reads, in one-letter code: Olfactory receptor 6B3 (331 aa).

At 1–25 the chain is on the extracellular side; the sequence is MSGENVTRVGTFILVGFPTAPGLQY. N-linked (GlcNAc...) asparagine glycosylation occurs at Asn-5. A helical transmembrane segment spans residues 26 to 46; sequence LLFLLFLLTYLFVLVENLAII. Residues 47–54 lie on the Cytoplasmic side of the membrane; it reads LTVWSSTS. A helical transmembrane segment spans residues 55 to 75; it reads LHRPMYYFLSSMSFLEIWYVS. At 76-99 the chain is on the extracellular side; that stretch reads DITPKMLEGFLLQQKRISFVGCMT. Cysteines 97 and 189 form a disulfide. A helical transmembrane segment spans residues 100–120; it reads QLYFFSSLVCTECVLLASMAY. The Cytoplasmic portion of the chain corresponds to 121 to 139; the sequence is DRYVAICHPLRYHVLVTPG. The chain crosses the membrane as a helical span at residues 140 to 160; it reads LCLQLVGFSFVSGFTISMIKV. Topologically, residues 161 to 196 are extracellular; it reads CFISSVTFCGSNVLNHFFCDISPILKLACTDFSTAE. Residues 197–217 form a helical membrane-spanning segment; it reads LVDFILAFIILVFPLLATMLS. At 218–237 the chain is on the cytoplasmic side; the sequence is YAHITLAVLRIPSATGCWRA. A helical transmembrane segment spans residues 238–258; it reads FFTCASHLTVVTVFYTALLFM. Over 259-271 the chain is Extracellular; it reads YVRPQAIDSRSSN. Residues 272–292 traverse the membrane as a helical segment; it reads KLISVLYTVITPILNPLIYCL. Topologically, residues 293-331 are cytoplasmic; sequence RNKEFKNALKKAFGLTSCAVEGRLSSLLELHLQIHSQPL.

The protein belongs to the G-protein coupled receptor 1 family.

It is found in the cell membrane. Its function is as follows. Odorant receptor. The polypeptide is Olfactory receptor 6B3 (OR6B3) (Homo sapiens (Human)).